A 194-amino-acid polypeptide reads, in one-letter code: MAGFRLLVGLGNPGSEYENTRHNAGAQWIEALARQSQCSLRSEKKFFGQFGKVYIAGEECYLLIPTTYMNLSGKAVQAVCQFYKIPPEEVLVIHDELDIPPGTAKLKQGGGHGGHNGLKDIISKLANNREFGRLRIGIGHPGHASQVANYVLKKAAPDDYTKIEQAIDESLRYVDDIVRGNLNAVMNQLHSFKA.

Residue Y17 coordinates tRNA. Catalysis depends on H22, which acts as the Proton acceptor. Residues Y68, N70, and N116 each coordinate tRNA.

Belongs to the PTH family. Monomer.

Its subcellular location is the cytoplasm. The enzyme catalyses an N-acyl-L-alpha-aminoacyl-tRNA + H2O = an N-acyl-L-amino acid + a tRNA + H(+). Hydrolyzes ribosome-free peptidyl-tRNAs (with 1 or more amino acids incorporated), which drop off the ribosome during protein synthesis, or as a result of ribosome stalling. Its function is as follows. Catalyzes the release of premature peptidyl moieties from peptidyl-tRNA molecules trapped in stalled 50S ribosomal subunits, and thus maintains levels of free tRNAs and 50S ribosomes. The polypeptide is Peptidyl-tRNA hydrolase (Marinomonas sp. (strain MWYL1)).